The chain runs to 211 residues: Uridine kinase (211 aa).

Residue 12-19 participates in ATP binding; sequence GGSGSGKT.

The protein belongs to the uridine kinase family.

It is found in the cytoplasm. The catalysed reaction is uridine + ATP = UMP + ADP + H(+). It catalyses the reaction cytidine + ATP = CMP + ADP + H(+). It functions in the pathway pyrimidine metabolism; CTP biosynthesis via salvage pathway; CTP from cytidine: step 1/3. Its pathway is pyrimidine metabolism; UMP biosynthesis via salvage pathway; UMP from uridine: step 1/1. The sequence is that of Uridine kinase from Bacillus licheniformis (strain ATCC 14580 / DSM 13 / JCM 2505 / CCUG 7422 / NBRC 12200 / NCIMB 9375 / NCTC 10341 / NRRL NRS-1264 / Gibson 46).